The chain runs to 247 residues: Isoprenyl transferase (247 aa).

Asp18 is a catalytic residue. Mg(2+) is bound at residue Asp18. Substrate contacts are provided by residues 19–22 (GNGR), Trp23, Arg31, His35, and 63–65 (SSE). Asn66 (proton acceptor) is an active-site residue. Residues Trp67, Arg69, Arg186, and 192 to 194 (RLS) each bind substrate. Residue Glu205 coordinates Mg(2+).

This sequence belongs to the UPP synthase family. In terms of assembly, homodimer. It depends on Mg(2+) as a cofactor.

In terms of biological role, catalyzes the condensation of isopentenyl diphosphate (IPP) with allylic pyrophosphates generating different type of terpenoids. The chain is Isoprenyl transferase from Agrobacterium fabrum (strain C58 / ATCC 33970) (Agrobacterium tumefaciens (strain C58)).